The following is a 406-amino-acid chain: Tyrosine-specific transport system 2 (406 aa).

11 consecutive transmembrane segments (helical) span residues 7–27 (FGSA…AMPL), 38–58 (LLLL…FVEV), 83–103 (IFAT…YITG), 119–139 (AMSL…FVVV), 150–170 (VLFI…LPKV), 183–203 (AFVV…VIMA), 219–239 (AILI…LATH), 279–299 (VFSS…VFEG), 314–334 (FVLT…YPEG), 335–355 (FITA…ILPI), and 376–396 (NFAL…PFLI).

It belongs to the amino acid/polyamine transporter 2 family. Mtr/TnaB/TyrP permease subfamily.

The protein localises to the cell inner membrane. It carries out the reaction L-tyrosine(in) + H(+)(in) = L-tyrosine(out) + H(+)(out). In terms of biological role, transports tyrosine across the cytoplasmic membrane. The transport system is energized by the proton motive force. This is Tyrosine-specific transport system 2 (tyrP-B) from Haemophilus influenzae (strain ATCC 51907 / DSM 11121 / KW20 / Rd).